The sequence spans 577 residues: Arginine--tRNA ligase (577 aa).

Residues 122 to 132 carry the 'HIGH' region motif; that stretch reads PNVAKEMHVGH.

It belongs to the class-I aminoacyl-tRNA synthetase family. As to quaternary structure, monomer.

The protein resides in the cytoplasm. It catalyses the reaction tRNA(Arg) + L-arginine + ATP = L-arginyl-tRNA(Arg) + AMP + diphosphate. This is Arginine--tRNA ligase from Vibrio parahaemolyticus serotype O3:K6 (strain RIMD 2210633).